The chain runs to 399 residues: Elongation factor Tu 1 (399 aa).

The 192-residue stretch at 17–208 (KPHVNVGTIG…LDDYVEVPPR (192 aa)) folds into the tr-type G domain. The G1 stretch occupies residues 26 to 33 (GHVDHGKT). Residue 26–33 (GHVDHGKT) participates in GTP binding. Thr33 is a Mg(2+) binding site. Positions 62–66 (GITIA) are G2. The interval 83–86 (DCPG) is G3. GTP is bound by residues 83–87 (DCPGH) and 138–141 (NKAD). The segment at 138–141 (NKAD) is G4. The interval 175–177 (SAL) is G5.

It belongs to the TRAFAC class translation factor GTPase superfamily. Classic translation factor GTPase family. EF-Tu/EF-1A subfamily. Monomer.

The protein resides in the cytoplasm. It carries out the reaction GTP + H2O = GDP + phosphate + H(+). In terms of biological role, GTP hydrolase that promotes the GTP-dependent binding of aminoacyl-tRNA to the A-site of ribosomes during protein biosynthesis. In Wolbachia sp. subsp. Brugia malayi (strain TRS), this protein is Elongation factor Tu 1.